The following is a 197-amino-acid chain: HTH-type transcriptional regulator BetI (197 aa).

In terms of domain architecture, HTH tetR-type spans 8 to 68 (PIRRQQLIEA…ATMGYIMSML (61 aa)). The segment at residues 31-50 (SIALIARLAGVSNGIISHYF) is a DNA-binding region (H-T-H motif).

It functions in the pathway amine and polyamine biosynthesis; betaine biosynthesis via choline pathway [regulation]. Its function is as follows. Repressor involved in the biosynthesis of the osmoprotectant glycine betaine. It represses transcription of the choline transporter BetT and the genes of BetAB involved in the synthesis of glycine betaine. The polypeptide is HTH-type transcriptional regulator BetI (Pseudomonas fluorescens (strain ATCC BAA-477 / NRRL B-23932 / Pf-5)).